The following is a 211-amino-acid chain: Ribonuclease T (211 aa).

The 175-residue stretch at 24–198 folds into the Exonuclease domain; sequence VVVDVETGGF…YDAEKTAHLF (175 aa). Mg(2+) contacts are provided by D27, E29, H185, and D190. Catalysis depends on H185, which acts as the Proton donor/acceptor.

The protein belongs to the RNase T family. In terms of assembly, homodimer. Mg(2+) serves as cofactor.

Its function is as follows. Trims short 3' overhangs of a variety of RNA species, leaving a one or two nucleotide 3' overhang. Responsible for the end-turnover of tRNA: specifically removes the terminal AMP residue from uncharged tRNA (tRNA-C-C-A). Also appears to be involved in tRNA biosynthesis. This Xylella fastidiosa (strain Temecula1 / ATCC 700964) protein is Ribonuclease T.